Here is a 216-residue protein sequence, read N- to C-terminus: UPF0598 protein C8orf82 (216 aa).

Belongs to the UPF0598 family.

The protein is UPF0598 protein C8orf82 (C8orf82) of Homo sapiens (Human).